We begin with the raw amino-acid sequence, 488 residues long: uncharacterized protein (488 aa).

27–38 (IVHFGFGAFHRA) serves as a coordination point for NAD(+).

The protein belongs to the mannitol dehydrogenase family. UxuB subfamily.

This is an uncharacterized protein from Escherichia coli (strain K12).